The following is a 325-amino-acid chain: Hexaprenyl-diphosphate synthase large subunit ((2E,6E)-farnesyl-diphosphate specific) (325 aa).

Isopentenyl diphosphate contacts are provided by Lys-45, Arg-48, and His-77. All-trans-hexaprenyl diphosphate contacts are provided by Asp-84, Asp-88, and Arg-93. Residues Asp-84 and Asp-88 each coordinate Mg(2+). Arg-94 serves as a coordination point for isopentenyl diphosphate. All-trans-hexaprenyl diphosphate is bound by residues Lys-170, Thr-171, and Gln-208.

The protein belongs to the FPP/GGPP synthase family. As to quaternary structure, dimer of heterodimer or heterotetramer composed of a small (Hexs-a) and large (Hexs-B) subunit. The cofactor is Mg(2+).

The catalysed reaction is 3 isopentenyl diphosphate + (2E,6E)-farnesyl diphosphate = all-trans-hexaprenyl diphosphate + 3 diphosphate. Functionally, catalyzes the condensation of three molecules of isopentenyl diphosphate with farnesyl diphosphate (FPP) to yield (all-E)-hexaprenyl diphosphate (HexPP; C30), the precursor of the prenyl side chain of menaquinone-6. Large subunit Hexs-B catalyzes the condensation reaction and the final product chain length is cooperatively regulated by both the Hexs-A and Hexs-B subunits using the whole size of the hydrophobic cleft as a ruler. The chain is Hexaprenyl-diphosphate synthase large subunit ((2E,6E)-farnesyl-diphosphate specific) (hexs-b) from Micrococcus luteus (Micrococcus lysodeikticus).